The following is a 417-amino-acid chain: MSRTTTVDGAPASDTDKQSISQPNQFIKRGTPQFMRVTLALFSAGLATFALLYCVQPILPVLSQEFGLTPANSSISLSISTAMLAIGLLFTGPLSDAIGRKPVMVTALLLASICTLLSTMMTSWHGILIMRALIGLSLSGVAAVGMTYLSEEIHPSFVAFSMGLYISGNSIGGMSGRLISGVFTDFFNWRIALAAIGCFALASALMFWKILPESRHFRPTSLRPKTLFINFRLHWRDRGLPLLFAEGFLLMGSFVTLFNYIGYRLMLSPWHVSQAVVGLLSLAYLTGTWSSPKAGTMTTRYGRGPVMLFSTGVMLFGLLMTLFSSLWLIFAGMLLFSAGFFAAHSVASSWIGPRAKRAKGQASSLYLFSYYLGSSIAGTLGGVFWHNYGWNGVGAFIALMLVIALLVGTRLHRRLHA.

The disordered stretch occupies residues 1-22 (MSRTTTVDGAPASDTDKQSISQ). At 1-38 (MSRTTTVDGAPASDTDKQSISQPNQFIKRGTPQFMRVT) the chain is on the periplasmic side. Residues 39-59 (LALFSAGLATFALLYCVQPIL) traverse the membrane as a helical segment. Residues 60-73 (PVLSQEFGLTPANS) lie on the Cytoplasmic side of the membrane. The chain crosses the membrane as a helical span at residues 74 to 94 (SISLSISTAMLAIGLLFTGPL). The Periplasmic portion of the chain corresponds to 95–101 (SDAIGRK). The helical transmembrane segment at 102–122 (PVMVTALLLASICTLLSTMMT) threads the bilayer. Topologically, residues 123–125 (SWH) are cytoplasmic. Residues 126–146 (GILIMRALIGLSLSGVAAVGM) form a helical membrane-spanning segment. Over 147–152 (TYLSEE) the chain is Periplasmic. A helical membrane pass occupies residues 153 to 173 (IHPSFVAFSMGLYISGNSIGG). Topologically, residues 174–190 (MSGRLISGVFTDFFNWR) are cytoplasmic. Residues 191 to 211 (IALAAIGCFALASALMFWKIL) form a helical membrane-spanning segment. Residues 212–241 (PESRHFRPTSLRPKTLFINFRLHWRDRGLP) are Periplasmic-facing. A helical membrane pass occupies residues 242–262 (LLFAEGFLLMGSFVTLFNYIG). Residues 263-264 (YR) are Cytoplasmic-facing. Residues 265-285 (LMLSPWHVSQAVVGLLSLAYL) traverse the membrane as a helical segment. Over 286–315 (TGTWSSPKAGTMTTRYGRGPVMLFSTGVML) the chain is Periplasmic. A helical transmembrane segment spans residues 316 to 336 (FGLLMTLFSSLWLIFAGMLLF). Residues 337-364 (SAGFFAAHSVASSWIGPRAKRAKGQASS) lie on the Cytoplasmic side of the membrane. Residues 365–385 (LYLFSYYLGSSIAGTLGGVFW) form a helical membrane-spanning segment. Over 386–387 (HN) the chain is Periplasmic. Residues 388–408 (YGWNGVGAFIALMLVIALLVG) traverse the membrane as a helical segment. At 409–417 (TRLHRRLHA) the chain is on the cytoplasmic side.

This sequence belongs to the major facilitator superfamily.

It is found in the cell inner membrane. The chain is Inner membrane transport protein YnfM (ynfM) from Escherichia coli (strain K12).